The primary structure comprises 2776 residues: A-kinase anchor protein 13 (2776 aa).

Disordered regions lie at residues Lys-371–Gln-401, Glu-452–Thr-518, Pro-547–Pro-584, Thr-618–Ser-641, Glu-653–Met-689, Val-760–Ala-871, Ala-910–Leu-951, Gly-995–Gly-1029, Leu-1431–Ile-1508, Pro-1527–Asn-1546, and Arg-1565–Glu-1603. Polar residues predominate over residues Asp-389–Gln-401. Residues Gln-493 to Thr-515 form an important for interaction with PRKAR2A region. The span at Pro-560–Cys-573 shows a compositional bias: basic and acidic residues. Residues Ala-659–Gly-672 are compositionally biased toward polar residues. The segment covering Ser-773–Glu-788 has biased composition (low complexity). Ser-784 is subject to Phosphoserine. Phosphothreonine is present on Thr-809. 2 stretches are compositionally biased toward basic and acidic residues: residues Asp-820–Gly-834 and Asp-914–Arg-940. The residue at position 941 (Thr-941) is a Phosphothreonine. The segment covering Thr-1005–Gln-1020 has biased composition (polar residues). Low complexity predominate over residues Asp-1433 to Thr-1444. Residues Gly-1454–Gly-1476 show a composition bias toward polar residues. Ser-1455, Ser-1473, Ser-1507, Ser-1532, and Ser-1569 each carry phosphoserine. The important for interaction with MAP2K3 stretch occupies residues Arg-1552 to Asn-1678. Positions Ser-1583–Ser-1594 are enriched in low complexity. Phosphoserine occurs at positions 1608, 1611, and 1613. An N6-methyllysine modification is found at Lys-1637. Residues Thr-1711–Thr-1756 form a disordered region. Positions Lys-1724–Thr-1751 are enriched in basic and acidic residues. A Phorbol-ester/DAG-type zinc finger spans residues Gly-1754–Cys-1801. 3 positions are modified to phosphoserine: Ser-1839, Ser-1858, and Ser-1892. An interaction with ESR1 region spans residues Met-1882–Cys-2776. At Thr-1893 the chain carries Phosphothreonine. 2 positions are modified to phosphoserine: Ser-1895 and Ser-1908. Residues Lys-1957–Lys-2154 form the DH domain. Residues Lys-2194–Asn-2296 enclose the PH domain. 2 positions are modified to phosphoserine: Ser-2308 and Ser-2361. Positions Ser-2308–Ile-2345 form a coiled coil. Thr-2431 bears the Phosphothreonine mark. The disordered stretch occupies residues Asp-2436–Asn-2471. The segment covering Gln-2455–Leu-2466 has biased composition (basic and acidic residues). 2 positions are modified to phosphoserine: Ser-2527 and Ser-2530. Positions Leu-2532 to Gln-2646 form a coiled coil. Disordered regions lie at residues Ala-2549–Gln-2605 and Glu-2626–Cys-2776. Composition is skewed to basic and acidic residues over residues His-2558–Gln-2605 and Glu-2626–Ser-2640. Composition is skewed to polar residues over residues Gln-2641–Asn-2653, Leu-2665–Arg-2700, and Ser-2713–Pro-2727. Phosphoserine is present on residues Ser-2673 and Ser-2692.

Interacts with the cAMP-dependent protein kinase (PKA) holoenzyme and with the regulatory subunit PRKAR2A. Interacts with RHOA. Also interacts with RHOB and RHOC. Identified in a ternary complex with RHOA and PRKAR2A. Identified in a complex with NR3C1 and RHOA. Interacts with BRAF and KSR1. Identified in a complex with BRAF and KSR1. Component of a signaling complex containing at least AKAP13, PKN1, MAPK14, ZAK and MAP2K3. Within this complex, AKAP13 interacts directly with PKN1, which in turn recruits MAPK14, MAP2K3 and ZAK. Interacts (phosphorylated form) with YWHAB and YWHAZ. Interaction with YWHAB inhibits activation of RHOA, interferes with PKN1 binding and activation of MAP kinases. Interacts with GNA12. Interacts with IKBKB. Interacts with ESR1, THRA, PPARA and NME2. Interacts (via the C-terminal domain after the PH domain) with MEF2C and RXRB. Interacts (via the C-terminal domain after the PH domain) with PRKD1. Detected in embryonic heart, limb bud, first branchial arch and forebrain (at protein level). Detected in heart. Detected in perichondrium, but not in the bone growth plate.

The protein resides in the cytoplasm. The protein localises to the cytosol. It is found in the cell cortex. It localises to the cytoskeleton. Its subcellular location is the nucleus. The protein resides in the membrane. In terms of biological role, scaffold protein that plays an important role in assembling signaling complexes downstream of several types of G protein-coupled receptors. Activates RHOA in response to signaling via G protein-coupled receptors via its function as Rho guanine nucleotide exchange factor. May also activate other Rho family members. Part of a kinase signaling complex that links ADRA1A and ADRA1B adrenergic receptor signaling to the activation of downstream p38 MAP kinases, such as MAPK11 and MAPK14. Part of a signaling complex that links ADRA1B signaling to the activation of RHOA and IKBKB/IKKB, leading to increased NF-kappa-B transcriptional activity. Part of a RHOA-dependent signaling cascade that mediates responses to lysophosphatidic acid (LPA), a signaling molecule that activates G-protein coupled receptors and potentiates transcriptional activation of the glucocorticoid receptor NR3C1. Part of a signaling cascade that stimulates MEF2C-dependent gene expression in response to lysophosphatidic acid (LPA). Part of a signaling pathway that activates MAPK11 and/or MAPK14 and leads to increased transcription activation of the estrogen receptors ESR1 and ESR2. Part of a signaling cascade that links cAMP and EGFR signaling to BRAF signaling and to PKA-mediated phosphorylation of KSR1, leading to the activation of downstream MAP kinases, such as MAPK1 or MAPK3. Functions as a scaffold protein that anchors cAMP-dependent protein kinase (PKA) and PRKD1. This promotes activation of PRKD1, leading to increased phosphorylation of HDAC5 and ultimately cardiomyocyte hypertrophy. Has no guanine nucleotide exchange activity on CDC42, Ras or Rac. Required for normal embryonic heart development, and in particular for normal sarcomere formation in the developing cardiomyocytes. Plays a role in cardiomyocyte growth and cardiac hypertrophy in response to activation of the beta-adrenergic receptor by phenylephrine or isoproterenol. Required for normal adaptive cardiac hypertrophy in response to pressure overload. Plays a role in osteogenesis. The chain is A-kinase anchor protein 13 from Mus musculus (Mouse).